A 205-amino-acid chain; its full sequence is Molybdenum cofactor guanylyltransferase (205 aa).

GTP contacts are provided by residues 14–16 (LAG), K27, D77, and D107. Residue D107 coordinates Mg(2+).

Belongs to the MobA family. In terms of assembly, monomer. Mg(2+) serves as cofactor.

It is found in the cytoplasm. It catalyses the reaction Mo-molybdopterin + GTP + H(+) = Mo-molybdopterin guanine dinucleotide + diphosphate. Its function is as follows. Transfers a GMP moiety from GTP to Mo-molybdopterin (Mo-MPT) cofactor (Moco or molybdenum cofactor) to form Mo-molybdopterin guanine dinucleotide (Mo-MGD) cofactor. The polypeptide is Molybdenum cofactor guanylyltransferase (Burkholderia cenocepacia (strain HI2424)).